A 96-amino-acid chain; its full sequence is (4S)-4-hydroxy-5-phosphonooxypentane-2,3-dione isomerase (96 aa).

In terms of domain architecture, ABM spans 2-91 (HVTLVEINVH…MTGPRTKKVF (90 aa)).

This sequence belongs to the LsrG family. Homodimer.

The protein localises to the cytoplasm. It catalyses the reaction (2S)-2-hydroxy-3,4-dioxopentyl phosphate = 3-hydroxy-2,4-dioxopentyl phosphate. Its function is as follows. Involved in the degradation of phospho-AI-2, thereby terminating induction of the lsr operon and closing the AI-2 signaling cycle. Catalyzes the conversion of (4S)-4-hydroxy-5-phosphonooxypentane-2,3-dione (P-DPD) to 3-hydroxy-5-phosphonooxypentane-2,4-dione (P-HPD). In Salmonella typhimurium (strain LT2 / SGSC1412 / ATCC 700720), this protein is (4S)-4-hydroxy-5-phosphonooxypentane-2,3-dione isomerase.